A 1062-amino-acid polypeptide reads, in one-letter code: Translation initiation factor IF-2 (1062 aa).

The disordered stretch occupies residues 34–463 (SASSTVEAPV…RMGAMVPRGN (430 aa)). The segment covering 76 to 121 (PTPPSRPGLAPRPGPRPVPGRPGPLGRPGPATPAPSPSPASPPLPA) has biased composition (pro residues). Residues 122–153 (SPVQASPVQASPVQASPTSAPAAPRPAAASAV) show a composition bias toward low complexity. A compositionally biased stretch (pro residues) spans 154-178 (PAPPMPSVPSAPSGPRPGPNAPRPG). The segment covering 198–214 (TAGGPTAGGPTAGGPTA) has biased composition (gly residues). Residues 294-305 (RPTPGGMPPRPG) are compositionally biased toward pro residues. 2 stretches are compositionally biased toward gly residues: residues 307-324 (PRSG…GTGG) and 344-430 (PGGG…GGRG). The segment covering 431-442 (RPGRQRKSKRAK) has biased composition (basic residues). The 173-residue stretch at 555-727 (SRPPVVTVMG…IVLTADASLD (173 aa)) folds into the tr-type G domain. The tract at residues 564 to 571 (GHVDHGKT) is G1. 564-571 (GHVDHGKT) contributes to the GTP binding site. Residues 589–593 (GITQH) form a G2 region. Residues 614–617 (DTPG) form a G3 region. Residues 614–618 (DTPGH) and 668–671 (NKVD) each bind GTP. Residues 668-671 (NKVD) are G4. A G5 region spans residues 704-706 (SAR).

It belongs to the TRAFAC class translation factor GTPase superfamily. Classic translation factor GTPase family. IF-2 subfamily.

The protein resides in the cytoplasm. Functionally, one of the essential components for the initiation of protein synthesis. Protects formylmethionyl-tRNA from spontaneous hydrolysis and promotes its binding to the 30S ribosomal subunits. Also involved in the hydrolysis of GTP during the formation of the 70S ribosomal complex. This chain is Translation initiation factor IF-2, found in Frankia casuarinae (strain DSM 45818 / CECT 9043 / HFP020203 / CcI3).